We begin with the raw amino-acid sequence, 109 residues long: uncharacterized protein (109 aa).

A helical membrane pass occupies residues 87–106 (WCSVGTAAAVGIFIGALLSM).

The protein belongs to the ElaB/YgaM/YqjD family. May bind to ribosomes.

The protein localises to the cell inner membrane. This is an uncharacterized protein from Escherichia coli O157:H7.